The following is a 498-amino-acid chain: Lysine--tRNA ligase (498 aa).

Residues glutamate 407 and glutamate 414 each contribute to the Mg(2+) site.

It belongs to the class-II aminoacyl-tRNA synthetase family. As to quaternary structure, homodimer. Requires Mg(2+) as cofactor.

It localises to the cytoplasm. It carries out the reaction tRNA(Lys) + L-lysine + ATP = L-lysyl-tRNA(Lys) + AMP + diphosphate. This Rhizobium etli (strain CIAT 652) protein is Lysine--tRNA ligase.